A 273-amino-acid polypeptide reads, in one-letter code: Putative phosphoenolpyruvate synthase regulatory protein (273 aa).

153-160 (AVSRAGKT) contacts ADP.

Belongs to the pyruvate, phosphate/water dikinase regulatory protein family. PSRP subfamily.

The enzyme catalyses [pyruvate, water dikinase] + ADP = [pyruvate, water dikinase]-phosphate + AMP + H(+). It carries out the reaction [pyruvate, water dikinase]-phosphate + phosphate + H(+) = [pyruvate, water dikinase] + diphosphate. Its function is as follows. Bifunctional serine/threonine kinase and phosphorylase involved in the regulation of the phosphoenolpyruvate synthase (PEPS) by catalyzing its phosphorylation/dephosphorylation. The polypeptide is Putative phosphoenolpyruvate synthase regulatory protein (Stenotrophomonas maltophilia (strain R551-3)).